The following is an 866-amino-acid chain: Dimethylglycine dehydrogenase, mitochondrial (866 aa).

The N-terminal 50 residues, 1-50 (MLRPGAQLLRGLLLRSCPLQGSPGRPRSVCGREGEEKPPLSAETQWKDRA), are a transit peptide targeting the mitochondrion. Residues 20-42 (QGSPGRPRSVCGREGEEKPPLSA) form a disordered region. FAD contacts are provided by residues 59-60 (CV), 80-81 (EK), and 87-95 (GSTWHAAGL). The residue at position 91 (H91) is a Tele-8alpha-FAD histidine. At K114 the chain carries N6-acetyllysine. Position 148 is an N6-acetyllysine; alternate (K148). K148 bears the N6-succinyllysine; alternate mark. Residue K168 is modified to N6-acetyllysine. V219 provides a ligand contact to FAD. K223 is subject to N6-acetyllysine. W251 provides a ligand contact to FAD. K317 and K319 each carry N6-succinyllysine. 2 positions are modified to N6-acetyllysine: K335 and K360. 397 to 402 (FGYGII) contacts FAD. Residues K434 and K523 each carry the N6-acetyllysine; alternate modification. Residues K434 and K523 each carry the N6-succinyllysine; alternate modification. (6S)-5,6,7,8-tetrahydrofolate is bound at residue 580–582 (ELT). K655 is modified (N6-acetyllysine; alternate). An N6-succinyllysine; alternate modification is found at K655. Residues Y676, 683–685 (ELY), and Y744 each bind (6S)-5,6,7,8-tetrahydrofolate. The residue at position 764 (K764) is an N6-acetyllysine. N6-succinyllysine is present on K795.

It belongs to the GcvT family. As to quaternary structure, monomer. FAD serves as cofactor.

The protein localises to the mitochondrion. The enzyme catalyses (6S)-5,6,7,8-tetrahydrofolyl-(gamma-L-Glu)(n) + N,N-dimethylglycine + oxidized [electron-transfer flavoprotein] + H(+) = (6R)-5,10-methylenetetrahydrofolyl-(gamma-L-Glu)(n) + sarcosine + reduced [electron-transfer flavoprotein]. The protein operates within amine and polyamine degradation; betaine degradation; sarcosine from betaine: step 2/2. Functionally, catalyzes the demethylation of N,N-dimethylglycine to sarcosine. Also has activity with sarcosine in vitro. The protein is Dimethylglycine dehydrogenase, mitochondrial (DMGDH) of Homo sapiens (Human).